We begin with the raw amino-acid sequence, 249 residues long: Homeobox protein TGIF2LX (249 aa).

Residues 1–27 (MEAAADRPAETRSRVEKDSRRAKKDSP) are compositionally biased toward basic and acidic residues. Disordered regions lie at residues 1–60 (MEAA…KKKR) and 121–215 (QRRG…EPVS). Polar residues predominate over residues 28–46 (AKTQSPAQDTSIMLRSNAD). The homeobox; TALE-type DNA-binding region spans 55–118 (EHKKKRKGYL…INARRRILPD (64 aa)). Positions 159-172 (DNVQSLPLRSSPKG) are enriched in polar residues. Residues 202-215 (VSNITSSSSPEPVS) are compositionally biased toward low complexity.

Belongs to the TALE/TGIF homeobox family.

Its subcellular location is the nucleus. Its function is as follows. May have a transcription role in testis. This Miopithecus talapoin (Angolan talapoin) protein is Homeobox protein TGIF2LX (TGIF2LX).